We begin with the raw amino-acid sequence, 528 residues long: Ecdysteroid UDP-glucosyltransferase (528 aa).

The first 32 residues, 1-32 (MGHLHIVHWRLTMNGAIAALFLCLVMVHQQHA), serve as a signal peptide directing secretion.

Belongs to the UDP-glycosyltransferase family.

Its function is as follows. Catalyzes the transfer of glucose from UDP-glucose to ecdysteroids which are insect molting hormones. Expression of egt interferes with normal insect development and block molting. This is Ecdysteroid UDP-glucosyltransferase (EGT) from Mamestra brassicae nuclear polyhedrosis virus (MbNPV).